Consider the following 1462-residue polypeptide: Gag-Pol polyprotein (1462 aa).

A lipid anchor (N-myristoyl glycine; by host) is attached at Gly-2. The interval 7-31 is interaction with Gp41; it reads VLRGKKADELEKVRLRPNGKKRYRL. Residues 16-22 carry the Nuclear export signal motif; sequence LEKVRLR. The Nuclear localization signal motif lies at 26 to 32; sequence KKRYRLK. An interaction with human PPIA/CYPA and NUP153 region spans residues 191-228; the sequence is NCVGDHQAAMQIIREIINEEAADWDAQHPIPGPLPAGQ. A dimerization/Multimerization of capsid protein p24 region spans residues 279–365; the sequence is YNPTNILDVK…GGPSQKARLM (87 aa). 2 consecutive CCHC-type zinc fingers follow at residues 389 to 406 and 410 to 427; these read IRCWNCGKEGHSAKQCRA and QGCWKCGKSGHIMANCPE. The tract at residues 433–509 is disordered; the sequence is LDGPTGKAAP…DAPQRGDRGL (77 aa). A compositionally biased stretch (polar residues) spans 448–465; it reads PSSSGADTNSTPNRSSSG. Composition is skewed to basic and acidic residues over residues 472–482 and 497–507; these read AAREKAERAEG and AGRDAPQRGDR. Residues 512–516 form a dimerization of protease region; it reads PQFSL. Positions 532 to 601 constitute a Peptidase A2 domain; the sequence is EVLLDTGADD…PINIFGRNIL (70 aa). Asp-536 serves as the catalytic For protease activity; shared with dimeric partner. Dimerization of protease regions lie at residues 560-566 and 599-611; these read GIGGFIN and NILATLGMSLNLP. The region spanning 655–845 is the Reverse transcriptase domain; sequence GQLEEAPPTN…PFQWMGYELW (191 aa). The Mg(2+) site is built by Asp-720, Asp-795, and Asp-796. Residues 837-845 are RT 'primer grip'; that stretch reads FQWMGYELW. The Tryptophan repeat motif signature appears at 1007–1023; that stretch reads WEQWWDNYWQVTWVPEW. The RNase H type-1 domain occupies 1043–1166; the sequence is IPGTETFYTD…VDHLVSQGIR (124 aa). Mg(2+) contacts are provided by Asp-1052, Glu-1087, Asp-1107, and Asp-1158. The Integrase-type zinc finger occupies 1172–1213; the sequence is EKIEPAQEEHEKYHSNIKELTHKFGIPQLVARQIVNTCAQCQ. Zn(2+)-binding residues include His-1181, His-1185, Cys-1209, and Cys-1212. Residues 1223–1374 form the Integrase catalytic domain; the sequence is VNAEIGVWQM…PAERLINMIT (152 aa). Residues Asp-1233, Asp-1285, and Glu-1321 each contribute to the Mg(2+) site. The segment at residues 1392-1439 is a DNA-binding region (integrase-type); it reads FQVYYREGRDQLWKGPGELLWKGDGAVIVKVGADIKVVPRRKAKIIRD.

As to quaternary structure, homotrimer; further assembles as hexamers of trimers. Interacts with gp41 (via C-terminus). Interacts with host CALM1; this interaction induces a conformational change in the Matrix protein, triggering exposure of the myristate group. Interacts with host AP3D1; this interaction allows the polyprotein trafficking to multivesicular bodies during virus assembly. Part of the pre-integration complex (PIC) which is composed of viral genome, matrix protein, Vpr and integrase. In terms of assembly, homodimer; the homodimer further multimerizes as homohexamers or homopentamers. Interacts with human PPIA/CYPA. Interacts with human NUP153. Interacts with host PDZD8; this interaction stabilizes the capsid. Interacts with monkey TRIM5; this interaction destabilizes the capsid. Homodimer, whose active site consists of two apposed aspartic acid residues. As to quaternary structure, heterodimer of p66 RT and p51 RT (RT p66/p51). Heterodimerization of RT is essential for DNA polymerase activity. The overall folding of the subdomains is similar in p66 RT and p51 RT but the spatial arrangements of the subdomains are dramatically different. In terms of assembly, homotetramer; may further associate as a homohexadecamer. Part of the pre-integration complex (PIC) which is composed of viral genome, matrix protein, Vpr and integrase. Interacts with human SMARCB1/INI1 and human PSIP1/LEDGF isoform 1. Interacts with human KPNA3; this interaction might play a role in nuclear import of the pre-integration complex. Interacts with human NUP153; this interaction might play a role in nuclear import of the pre-integration complex. Requires Mg(2+) as cofactor. In terms of processing, specific enzymatic cleavages by the viral protease yield mature proteins. The protease is released by autocatalytic cleavage. The polyprotein is cleaved during and after budding, this process is termed maturation. Proteolytic cleavage of p66 RT removes the RNase H domain to yield the p51 RT subunit. Nucleocapsid protein p7 might be further cleaved after virus entry.

It localises to the host cell membrane. The protein resides in the host endosome. Its subcellular location is the host multivesicular body. The protein localises to the virion membrane. It is found in the host nucleus. It localises to the host cytoplasm. The protein resides in the virion. The catalysed reaction is Endopeptidase for which the P1 residue is preferably hydrophobic.. It carries out the reaction Endohydrolysis of RNA in RNA/DNA hybrids. Three different cleavage modes: 1. sequence-specific internal cleavage of RNA. Human immunodeficiency virus type 1 and Moloney murine leukemia virus enzymes prefer to cleave the RNA strand one nucleotide away from the RNA-DNA junction. 2. RNA 5'-end directed cleavage 13-19 nucleotides from the RNA end. 3. DNA 3'-end directed cleavage 15-20 nucleotides away from the primer terminus.. The enzyme catalyses 3'-end directed exonucleolytic cleavage of viral RNA-DNA hybrid.. It catalyses the reaction DNA(n) + a 2'-deoxyribonucleoside 5'-triphosphate = DNA(n+1) + diphosphate. With respect to regulation, protease: The viral protease is inhibited by many synthetic protease inhibitors (PIs), such as amprenavir, atazanavir, indinavir, loprinavir, nelfinavir, ritonavir and saquinavir. Use of protease inhibitors in tritherapy regimens permit more ambitious therapeutic strategies. Reverse transcriptase/ribonuclease H: RT can be inhibited either by nucleoside RT inhibitors (NRTIs) or by non nucleoside RT inhibitors (NNRTIs). NRTIs act as chain terminators, whereas NNRTIs inhibit DNA polymerization by binding a small hydrophobic pocket near the RT active site and inducing an allosteric change in this region. Classical NRTIs are abacavir, adefovir (PMEA), didanosine (ddI), lamivudine (3TC), stavudine (d4T), tenofovir (PMPA), zalcitabine (ddC), and zidovudine (AZT). Classical NNRTIs are atevirdine (BHAP U-87201E), delavirdine, efavirenz (DMP-266), emivirine (I-EBU), and nevirapine (BI-RG-587). The tritherapies used as a basic effective treatment of AIDS associate two NRTIs and one NNRTI. Its function is as follows. Mediates, with Gag polyprotein, the essential events in virion assembly, including binding the plasma membrane, making the protein-protein interactions necessary to create spherical particles, recruiting the viral Env proteins, and packaging the genomic RNA via direct interactions with the RNA packaging sequence (Psi). Gag-Pol polyprotein may regulate its own translation, by the binding genomic RNA in the 5'-UTR. At low concentration, the polyprotein would promote translation, whereas at high concentration, the polyprotein would encapsidate genomic RNA and then shut off translation. In terms of biological role, targets the polyprotein to the plasma membrane via a multipartite membrane-binding signal, that includes its myristoylated N-terminus. Matrix protein is part of the pre-integration complex. Implicated in the release from host cell mediated by Vpu. Binds to RNA. Functionally, forms the conical core that encapsulates the genomic RNA-nucleocapsid complex in the virion. Most core are conical, with only 7% tubular. The core is constituted by capsid protein hexamer subunits. The core is disassembled soon after virion entry. Host restriction factors such as TRIM5-alpha or TRIMCyp bind retroviral capsids and cause premature capsid disassembly, leading to blocks in reverse transcription. Capsid restriction by TRIM5 is one of the factors which restricts HIV-1 to the human species. Host PIN1 apparently facilitates the virion uncoating. On the other hand, interactions with PDZD8 or CYPA stabilize the capsid. Encapsulates and protects viral dimeric unspliced genomic RNA (gRNA). Binds these RNAs through its zinc fingers. Acts as a nucleic acid chaperone which is involved in rearangement of nucleic acid secondary structure during gRNA retrotranscription. Also facilitates template switch leading to recombination. As part of the polyprotein, participates in gRNA dimerization, packaging, tRNA incorporation and virion assembly. Its function is as follows. Aspartyl protease that mediates proteolytic cleavages of Gag and Gag-Pol polyproteins during or shortly after the release of the virion from the plasma membrane. Cleavages take place as an ordered, step-wise cascade to yield mature proteins. This process is called maturation. Displays maximal activity during the budding process just prior to particle release from the cell. Also cleaves Nef and Vif, probably concomitantly with viral structural proteins on maturation of virus particles. Hydrolyzes host EIF4GI and PABP1 in order to shut off the capped cellular mRNA translation. The resulting inhibition of cellular protein synthesis serves to ensure maximal viral gene expression and to evade host immune response. In terms of biological role, multifunctional enzyme that converts the viral RNA genome into dsDNA in the cytoplasm, shortly after virus entry into the cell. This enzyme displays a DNA polymerase activity that can copy either DNA or RNA templates, and a ribonuclease H (RNase H) activity that cleaves the RNA strand of RNA-DNA heteroduplexes in a partially processive 3' to 5' endonucleasic mode. Conversion of viral genomic RNA into dsDNA requires many steps. A tRNA(3)-Lys binds to the primer-binding site (PBS) situated at the 5'-end of the viral RNA. RT uses the 3' end of the tRNA primer to perform a short round of RNA-dependent minus-strand DNA synthesis. The reading proceeds through the U5 region and ends after the repeated (R) region which is present at both ends of viral RNA. The portion of the RNA-DNA heteroduplex is digested by the RNase H, resulting in a ssDNA product attached to the tRNA primer. This ssDNA/tRNA hybridizes with the identical R region situated at the 3' end of viral RNA. This template exchange, known as minus-strand DNA strong stop transfer, can be either intra- or intermolecular. RT uses the 3' end of this newly synthesized short ssDNA to perform the RNA-dependent minus-strand DNA synthesis of the whole template. RNase H digests the RNA template except for two polypurine tracts (PPTs) situated at the 5'-end and near the center of the genome. It is not clear if both polymerase and RNase H activities are simultaneous. RNase H probably can proceed both in a polymerase-dependent (RNA cut into small fragments by the same RT performing DNA synthesis) and a polymerase-independent mode (cleavage of remaining RNA fragments by free RTs). Secondly, RT performs DNA-directed plus-strand DNA synthesis using the PPTs that have not been removed by RNase H as primers. PPTs and tRNA primers are then removed by RNase H. The 3' and 5' ssDNA PBS regions hybridize to form a circular dsDNA intermediate. Strand displacement synthesis by RT to the PBS and PPT ends produces a blunt ended, linear dsDNA copy of the viral genome that includes long terminal repeats (LTRs) at both ends. Functionally, catalyzes viral DNA integration into the host chromosome, by performing a series of DNA cutting and joining reactions. This enzyme activity takes place after virion entry into a cell and reverse transcription of the RNA genome in dsDNA. The first step in the integration process is 3' processing. This step requires a complex comprising the viral genome, matrix protein, Vpr and integrase. This complex is called the pre-integration complex (PIC). The integrase protein removes 2 nucleotides from each 3' end of the viral DNA, leaving recessed CA OH's at the 3' ends. In the second step, the PIC enters cell nucleus. This process is mediated through integrase and Vpr proteins, and allows the virus to infect a non dividing cell. This ability to enter the nucleus is specific of lentiviruses, other retroviruses cannot and rely on cell division to access cell chromosomes. In the third step, termed strand transfer, the integrase protein joins the previously processed 3' ends to the 5' ends of strands of target cellular DNA at the site of integration. The 5'-ends are produced by integrase-catalyzed staggered cuts, 5 bp apart. A Y-shaped, gapped, recombination intermediate results, with the 5'-ends of the viral DNA strands and the 3' ends of target DNA strands remaining unjoined, flanking a gap of 5 bp. The last step is viral DNA integration into host chromosome. This involves host DNA repair synthesis in which the 5 bp gaps between the unjoined strands are filled in and then ligated. Since this process occurs at both cuts flanking the HIV genome, a 5 bp duplication of host DNA is produced at the ends of HIV-1 integration. Alternatively, Integrase may catalyze the excision of viral DNA just after strand transfer, this is termed disintegration. In Human immunodeficiency virus type 2 subtype A (isolate D194) (HIV-2), this protein is Gag-Pol polyprotein (gag-pol).